Consider the following 538-residue polypeptide: MNSTAANVKPEPGLYGPDAAASPAIARYLIQGPSPLSIGLVVLIGAISSFLLQQFLKPAVNPLSPKFTSNTWPWLGSLGMMIGHWTFWKSCIKESKTGQFSFWLGRTHVVGLSGPDARKMFFEHPALDLHKATDLTPLGVNFWPIHAIFTPRDEKFQKSTYWLRTLTHLMKTPNMERCLPGVIQDARTGLEALKRDTPSGIINTPKVWPVVFKQTARVFMADDVTDDPKLWATTLGAIDTILHTFSPFNTLLPWIPEPSMIRRRMARRALLRVSRGIVRDRHASPKSASKNDAVQSLINLGDPDDNISEFMINAAFVGVVNAHVIFPQLLNALAVHLDWQDKVYKEVTEVADQHCKEQCLPLVDKLFHIPLSAWENSFPNAALMMEEISRIWTCFPTARFNTLYESIPIPGTSEVIPARTHAIYNSTEIHFNPKLYDRPASFRPDRFAPESQKTWDKEPHGLNTWGTGQRLCSGMRWAKLQQNILMAVALSLYRLEKCDKDGKPDPSAYEKQQAMDGDLDEEVAFVLPECFVKLIPRE.

The chain crosses the membrane as a helical span at residues 36–56 (LSIGLVVLIGAISSFLLQQFL). Residues N306 and N425 are each glycosylated (N-linked (GlcNAc...) asparagine). C472 is a binding site for heme.

It belongs to the cytochrome P450 family. Heme serves as cofactor.

The protein resides in the membrane. It carries out the reaction 2 nataloe emodin + reduced [NADPH--hemoprotein reductase] + O2 = cladofulvin + oxidized [NADPH--hemoprotein reductase] + 2 H2O + H(+). Its pathway is pigment biosynthesis. Its function is as follows. Cytochrome P450 monooxygenase; part of the gene cluster that mediates the biosynthesis of the bianthraquinone cladofulvin, a conidial pigment not required for virulence but that plays a role in fitness and resistance to environmental stresses including UV light and low-temperature stress. The pathway begins with the synthesis of atrochrysone thioester by the polyketide synthase (PKS) claG. The atrochrysone carboxyl ACP thioesterase claF then breaks the thioester bond and releases the atrochrysone carboxylic acid from claG. This compound is decarboxylated by claH to yield emodin, which is further converted to chrysophanol hydroquinone by the reductase claC and the dehydratase claB. The cytochrome monooxygenase P450 claM then catalyzes the dimerization of nataloe-emodin to cladofulvin. This is Cytochrome P450 monooxygenase claM from Passalora fulva (Tomato leaf mold).